Consider the following 261-residue polypeptide: Leucine-rich repeat-containing protein 61 (261 aa).

LRR repeat units follow at residues 54–75 (GLEWLDLSGNALTQLGPLASLR), 76–97 (QLAVLNVADNRLTGLEPLAACE), and 98–119 (NLQCLNAAGNLLAGPAQLQCLA). One can recognise an LRRCT domain in the interval 138–183 (NPLCASPCYWASVRELLPGLKVLDGERVSGRGSDFYQLCRDLDSSL).

This chain is Leucine-rich repeat-containing protein 61 (LRRC61), found in Bos taurus (Bovine).